Here is a 529-residue protein sequence, read N- to C-terminus: Tyrosine-protein kinase Fgr (529 aa).

Glycine 2 carries the N-myristoyl glycine lipid modification. 2 S-palmitoyl cysteine lipidation sites follow: cysteine 3 and cysteine 6. The residue at position 34 (tyrosine 34) is a Phosphotyrosine. The region spanning 77–138 is the SH3 domain; it reads IGVTLFIALY…PSNYVAPVDS (62 aa). The SH2 domain maps to 144-241; the sequence is WYFGKIGRKD…GLCNLLIAPC (98 aa). Phosphotyrosine is present on tyrosine 208. At serine 218 the chain carries Phosphoserine. The Protein kinase domain occupies 263–516; sequence ITLERRLGTG…YLQSFLEDYF (254 aa). Residues 269–277 and lysine 291 each bind ATP; that span reads LGTGCFGDV. Aspartate 382 serves as the catalytic Proton acceptor. Tyrosine 412 carries the phosphotyrosine modification. Tyrosine 523 is modified (phosphotyrosine; by SRC).

This sequence belongs to the protein kinase superfamily. Tyr protein kinase family. SRC subfamily. As to quaternary structure, interacts with ITGB1, ITGB2, MS4A2/FCER1B, FCER1G, FCGR2A and/or FCGR2B. Interacts (via SH2 domain) with SYK (tyrosine phosphorylated). Interacts (via SH2 domain) with FLT3 (tyrosine phosphorylated). Interacts with PTK2/FAK1. Interacts (via SH2 domain) with HCLS1 (tyrosine phosphorylated by SYK). Interacts with SIRPA and PTPNS1. Interacts (not phosphorylated on tyrosine residues) with CBL; FGR tyrosine phosphorylation promotes dissociation. Interacts with PIK3R1 and FASLG. Interacts with CLNK. Ubiquitinated. Becomes ubiquitinated in response to ITGB2 signaling; this does not lead to degradation. Post-translationally, phosphorylated. Autophosphorylated on tyrosine residues. Becomes phosphorylated in response to FCGR2A and/or FCGR2B engagement, cell adhesion and signaling by ITGB2. Prior phosphorylation at Tyr-523 by SRC inhibits ulterior autophosphorylation at Tyr-412. Detected in neutrophils, monocytes and natural killer cells (at protein level). Detected in monocytes and large lymphocytes.

It localises to the cell membrane. The protein localises to the cell projection. It is found in the ruffle membrane. Its subcellular location is the cytoplasm. The protein resides in the cytosol. It localises to the cytoskeleton. The protein localises to the mitochondrion inner membrane. It is found in the mitochondrion intermembrane space. The enzyme catalyses L-tyrosyl-[protein] + ATP = O-phospho-L-tyrosyl-[protein] + ADP + H(+). With respect to regulation, activated by autophosphorylation. Prior phosphorylation at Tyr-523 by SRC inhibits ulterior autophosphorylation at Tyr-412. Activated by phorbol myristate acetate, phosphatidic acid and poly-Lys. Binding (via SH2 domain) of HCLS1 that is already phosphorylated by SYK strongly increases kinase activity. Its function is as follows. Non-receptor tyrosine-protein kinase that transmits signals from cell surface receptors devoid of kinase activity and contributes to the regulation of immune responses, including neutrophil, monocyte, macrophage and mast cell functions, cytoskeleton remodeling in response to extracellular stimuli, phagocytosis, cell adhesion and migration. Promotes mast cell degranulation, release of inflammatory cytokines and IgE-mediated anaphylaxis. Acts downstream of receptors that bind the Fc region of immunoglobulins, such as MS4A2/FCER1B, FCGR2A and/or FCGR2B. Acts downstream of ITGB1 and ITGB2, and regulates actin cytoskeleton reorganization, cell spreading and adhesion. Depending on the context, activates or inhibits cellular responses. Functions as a negative regulator of ITGB2 signaling, phagocytosis and SYK activity in monocytes. Required for normal ITGB1 and ITGB2 signaling, normal cell spreading and adhesion in neutrophils and macrophages. Functions as a positive regulator of cell migration and regulates cytoskeleton reorganization via RAC1 activation. Phosphorylates SYK (in vitro) and promotes SYK-dependent activation of AKT1 and MAP kinase signaling. Phosphorylates PLD2 in antigen-stimulated mast cells, leading to PLD2 activation and the production of the signaling molecules lysophosphatidic acid and diacylglycerol. Promotes activation of PIK3R1. Phosphorylates FASLG, and thereby regulates its ubiquitination and subsequent internalization. Phosphorylates ABL1. Promotes phosphorylation of CBL, CTTN, PIK3R1, PTK2/FAK1, PTK2B/PYK2 and VAV2. Phosphorylates HCLS1 that has already been phosphorylated by SYK, but not unphosphorylated HCLS1. Together with CLNK, it acts as a negative regulator of natural killer cell-activating receptors and inhibits interferon-gamma production. The sequence is that of Tyrosine-protein kinase Fgr (FGR) from Homo sapiens (Human).